We begin with the raw amino-acid sequence, 357 residues long: GTPase Obg (357 aa).

An Obg domain is found at M1–L159. Positions A160 to E343 constitute an OBG-type G domain. Residues G166–S173, F191–Y195, D213–G216, N293–D296, and S324–V326 each bind GTP. Positions 173 and 193 each coordinate Mg(2+).

This sequence belongs to the TRAFAC class OBG-HflX-like GTPase superfamily. OBG GTPase family. As to quaternary structure, monomer. It depends on Mg(2+) as a cofactor.

Its subcellular location is the cytoplasm. An essential GTPase which binds GTP, GDP and possibly (p)ppGpp with moderate affinity, with high nucleotide exchange rates and a fairly low GTP hydrolysis rate. Plays a role in control of the cell cycle, stress response, ribosome biogenesis and in those bacteria that undergo differentiation, in morphogenesis control. This Xylella fastidiosa (strain 9a5c) protein is GTPase Obg.